Reading from the N-terminus, the 359-residue chain is MLYWLYQYYGVNIFSYITFRAGVAFFVAFGLSVFFMPYFIKWAKAKKANQPISTYVAAHEGKKNTPTMGGIVFIISMICASLLCGNLFNPYVLLGLFCISCFALIGARDDYMKISAKNNAGMSAKMKFFLLFIVSLIITSILLYIGHNTNFYIPFMKYPLFDMGAFKIMDISVLALGFWVLVFLATSNAVNITDGLDGLATMPSICALFSLSAFVYVAGHAGFSSYLLYPKVVDSGELVILSVALIGALFGFLWYNCHPAQVFMGDSGSLALGAFIAFMAIVSNNEILLLLIGIIFVIEALSVILQVGSYKYRKKRIFAMAPIHHHFEVQGWAENKIIVRFWIIAILANIIALLSLKIR.

Helical transmembrane passes span 23–43, 68–88, 92–112, 126–146, 165–185, 198–218, 235–255, 262–282, 287–307, and 336–356; these read VAFF…IKWA, MGGI…GNLF, VLLG…DDYM, MKFF…LYIG, AFKI…VFLA, GLAT…VYVA, SGEL…FLWY, VFMG…MAIV, ILLL…ILQV, and KIIV…LLSL.

The protein belongs to the glycosyltransferase 4 family. MraY subfamily. Mg(2+) serves as cofactor.

The protein resides in the cell inner membrane. It carries out the reaction UDP-N-acetyl-alpha-D-muramoyl-L-alanyl-gamma-D-glutamyl-meso-2,6-diaminopimeloyl-D-alanyl-D-alanine + di-trans,octa-cis-undecaprenyl phosphate = di-trans,octa-cis-undecaprenyl diphospho-N-acetyl-alpha-D-muramoyl-L-alanyl-D-glutamyl-meso-2,6-diaminopimeloyl-D-alanyl-D-alanine + UMP. It participates in cell wall biogenesis; peptidoglycan biosynthesis. Functionally, catalyzes the initial step of the lipid cycle reactions in the biosynthesis of the cell wall peptidoglycan: transfers peptidoglycan precursor phospho-MurNAc-pentapeptide from UDP-MurNAc-pentapeptide onto the lipid carrier undecaprenyl phosphate, yielding undecaprenyl-pyrophosphoryl-MurNAc-pentapeptide, known as lipid I. This is Phospho-N-acetylmuramoyl-pentapeptide-transferase from Helicobacter hepaticus (strain ATCC 51449 / 3B1).